A 149-amino-acid chain; its full sequence is Protein-export protein SecB (149 aa).

The protein belongs to the SecB family. As to quaternary structure, homotetramer, a dimer of dimers. One homotetramer interacts with 1 SecA dimer.

The protein resides in the cytoplasm. One of the proteins required for the normal export of preproteins out of the cell cytoplasm. It is a molecular chaperone that binds to a subset of precursor proteins, maintaining them in a translocation-competent state. It also specifically binds to its receptor SecA. The sequence is that of Protein-export protein SecB from Acidithiobacillus ferrooxidans (strain ATCC 23270 / DSM 14882 / CIP 104768 / NCIMB 8455) (Ferrobacillus ferrooxidans (strain ATCC 23270)).